The chain runs to 143 residues: Transcriptional regulator MraZ (143 aa).

2 consecutive SpoVT-AbrB domains span residues E5–E47 and A76–N119.

This sequence belongs to the MraZ family. Forms oligomers.

It is found in the cytoplasm. It localises to the nucleoid. The chain is Transcriptional regulator MraZ from Caldicellulosiruptor bescii (strain ATCC BAA-1888 / DSM 6725 / KCTC 15123 / Z-1320) (Anaerocellum thermophilum).